Here is a 205-residue protein sequence, read N- to C-terminus: High frequency lysogenization protein HflD homolog (205 aa).

It belongs to the HflD family.

Its subcellular location is the cytoplasm. It localises to the cell inner membrane. This Haemophilus influenzae (strain 86-028NP) protein is High frequency lysogenization protein HflD homolog.